The chain runs to 79 residues: MLTKINKAIALVFVSLISFYQKWISPLFGPSCRFIPSCSAYGIEAVNKHGPWRGGWLTLKRLSKCHPLTPCGCDPVPEK.

It belongs to the UPF0161 family.

It localises to the cell inner membrane. Functionally, could be involved in insertion of integral membrane proteins into the membrane. The sequence is that of Putative membrane protein insertion efficiency factor from Prochlorococcus marinus (strain NATL2A).